The primary structure comprises 241 residues: ATP synthase subunit a (241 aa).

A run of 8 helical transmembrane segments spans residues N29–I49, V54–I74, I86–P106, H114–F134, W153–L173, L177–N197, I200–V220, and A221–K241.

This sequence belongs to the ATPase A chain family. F-type ATPases have 2 components, CF(1) - the catalytic core - and CF(0) - the membrane proton channel. CF(1) has five subunits: alpha(3), beta(3), gamma(1), delta(1), epsilon(1). CF(0) has three main subunits: a(1), b(2) and c(9-12). The alpha and beta chains form an alternating ring which encloses part of the gamma chain. CF(1) is attached to CF(0) by a central stalk formed by the gamma and epsilon chains, while a peripheral stalk is formed by the delta and b chains.

It is found in the cell membrane. Key component of the proton channel; it plays a direct role in the translocation of protons across the membrane. In Wolbachia pipientis wMel, this protein is ATP synthase subunit a.